Reading from the N-terminus, the 187-residue chain is MSYYTLWVIAFGLSMDAFAVSVGKGLTLADFCWKFTLKIALCFGLFQACMPLLGYYVGSHFSDYISEFDHWIAFALLCVIGINMIKMSVTNENSDDDPSDFSLRHLTMLGVATSIDALAMGVSFAFLKVNIWTAAAIIGITTTILSLFGVKAGHWLGDRIHKQAELLGGIILIAMGVKVLIEHRVFG.

6 helical membrane-spanning segments follow: residues 3 to 23, 39 to 59, 65 to 85, 106 to 126, 129 to 149, and 166 to 186; these read YYTL…VSVG, IALC…YVGS, ISEF…INMI, LTML…SFAF, VNIW…SLFG, and LLGG…HRVF.

This sequence belongs to the MntP (TC 9.B.29) family.

The protein resides in the cell inner membrane. Its function is as follows. Probably functions as a manganese efflux pump. The sequence is that of Putative manganese efflux pump MntP from Actinobacillus succinogenes (strain ATCC 55618 / DSM 22257 / CCUG 43843 / 130Z).